Consider the following 32-residue polypeptide: Ribulose bisphosphate carboxylase/oxygenase activase, chloroplastic (32 aa).

The tract at residues 13-32 is disordered; it reads FGALREGPPTFEQPAMTIEK.

It belongs to the RuBisCO activase family.

It localises to the plastid. The protein localises to the chloroplast stroma. Activation of RuBisCO (ribulose-1,5-bisphosphate carboxylase/oxygenase; EC 4.1.1.39) involves the ATP-dependent carboxylation of the epsilon-amino group of lysine leading to a carbamate structure. This Populus euphratica (Euphrates poplar) protein is Ribulose bisphosphate carboxylase/oxygenase activase, chloroplastic.